The primary structure comprises 450 residues: Bifunctional protein GlmU (450 aa).

A pyrophosphorylase region spans residues 1–236 (MTAHKPFSAV…AWEVSGVNNR (236 aa)). Residues 12–15 (LAAG), Lys26, Gln79, 84–85 (GT), 107–109 (YGD), Gly147, Glu162, Asn177, and Asn234 each bind UDP-N-acetyl-alpha-D-glucosamine. Asp109 serves as a coordination point for Mg(2+). Asn234 contacts Mg(2+). A linker region spans residues 237–257 (AELASLESLWQNRKRQDVMKD). The N-acetyltransferase stretch occupies residues 258–450 (GASLIAPETV…KKFRQRKKKK (193 aa)). The UDP-N-acetyl-alpha-D-glucosamine site is built by Arg323 and Lys341. His353 (proton acceptor) is an active-site residue. UDP-N-acetyl-alpha-D-glucosamine is bound by residues Tyr356 and Asn367. Residues 376 to 377 (NY), Ser395, Ala413, and Arg430 contribute to the acetyl-CoA site.

It in the N-terminal section; belongs to the N-acetylglucosamine-1-phosphate uridyltransferase family. The protein in the C-terminal section; belongs to the transferase hexapeptide repeat family. Homotrimer. Mg(2+) serves as cofactor.

It localises to the cytoplasm. The enzyme catalyses alpha-D-glucosamine 1-phosphate + acetyl-CoA = N-acetyl-alpha-D-glucosamine 1-phosphate + CoA + H(+). It catalyses the reaction N-acetyl-alpha-D-glucosamine 1-phosphate + UTP + H(+) = UDP-N-acetyl-alpha-D-glucosamine + diphosphate. Its pathway is nucleotide-sugar biosynthesis; UDP-N-acetyl-alpha-D-glucosamine biosynthesis; N-acetyl-alpha-D-glucosamine 1-phosphate from alpha-D-glucosamine 6-phosphate (route II): step 2/2. The protein operates within nucleotide-sugar biosynthesis; UDP-N-acetyl-alpha-D-glucosamine biosynthesis; UDP-N-acetyl-alpha-D-glucosamine from N-acetyl-alpha-D-glucosamine 1-phosphate: step 1/1. It participates in bacterial outer membrane biogenesis; LPS lipid A biosynthesis. Its function is as follows. Catalyzes the last two sequential reactions in the de novo biosynthetic pathway for UDP-N-acetylglucosamine (UDP-GlcNAc). The C-terminal domain catalyzes the transfer of acetyl group from acetyl coenzyme A to glucosamine-1-phosphate (GlcN-1-P) to produce N-acetylglucosamine-1-phosphate (GlcNAc-1-P), which is converted into UDP-GlcNAc by the transfer of uridine 5-monophosphate (from uridine 5-triphosphate), a reaction catalyzed by the N-terminal domain. The chain is Bifunctional protein GlmU from Zymomonas mobilis subsp. mobilis (strain ATCC 31821 / ZM4 / CP4).